The chain runs to 183 residues: Adenine phosphoribosyltransferase (183 aa).

This sequence belongs to the purine/pyrimidine phosphoribosyltransferase family. In terms of assembly, homodimer.

Its subcellular location is the cytoplasm. The catalysed reaction is AMP + diphosphate = 5-phospho-alpha-D-ribose 1-diphosphate + adenine. The protein operates within purine metabolism; AMP biosynthesis via salvage pathway; AMP from adenine: step 1/1. Catalyzes a salvage reaction resulting in the formation of AMP, that is energically less costly than de novo synthesis. The protein is Adenine phosphoribosyltransferase of Cronobacter sakazakii (strain ATCC BAA-894) (Enterobacter sakazakii).